We begin with the raw amino-acid sequence, 248 residues long: UPF0246 protein lp_0089 (248 aa).

Belongs to the UPF0246 family.

The polypeptide is UPF0246 protein lp_0089 (Lactiplantibacillus plantarum (strain ATCC BAA-793 / NCIMB 8826 / WCFS1) (Lactobacillus plantarum)).